The chain runs to 460 residues: Muscarinic acetylcholine receptor M1 (460 aa).

Over 1–22 (MNTSVPPAVSPNITVLAPGKGP) the chain is Extracellular. N-linked (GlcNAc...) asparagine glycans are attached at residues Asn2 and Asn12. A helical membrane pass occupies residues 23–48 (WQVAFIGITTGLLSLATVTGNLLVLI). Topologically, residues 49–62 (SFKVNTELKTVNNY) are cytoplasmic. Residues 63-84 (FLLSLACADLIIGTFSMNLYTT) traverse the membrane as a helical segment. The Extracellular portion of the chain corresponds to 85–95 (YLLMGHWALGT). The chain crosses the membrane as a helical span at residues 96–121 (LACDLWLALDYVASNASVMNLLLISF). An intrachain disulfide couples Cys98 to Cys178. Over 122–142 (DRYFSVTRPLSYRAKRTPRRA) the chain is Cytoplasmic. Residues 143–164 (ALMIGLAWLVSFVLWAPAILFW) traverse the membrane as a helical segment. The Extracellular segment spans residues 165–185 (QYLVGERTVLAGQCYIQFLSQ). A helical transmembrane segment spans residues 186-209 (PIITFGTAMAAFYLPVTVMCTLYW). The Cytoplasmic portion of the chain corresponds to 210-366 (RIYRETENRA…LVKEKKAART (157 aa)). Disordered stretches follow at residues 225 to 257 (LQGS…SPPG), 274 to 297 (WKEE…EEPG), and 310 to 351 (EAQA…QLAK). A Phosphothreonine modification is found at Thr230. Over residues 238–257 (SSSSERSQPGAEGSPESPPG) the composition is skewed to low complexity. A Phosphoserine modification is found at Ser254. A compositionally biased stretch (basic residues) spans 328–343 (RPTKKGRDRGGKGQKP). A helical transmembrane segment spans residues 367 to 390 (LSAILLAFILTWTPYNIMVLVSTF). At 391-397 (CKDCVPE) the chain is on the extracellular side. A helical transmembrane segment spans residues 398–420 (TLWELGYWLCYVNSTVNPMCYAL). Over 421–460 (CNKAFRDTFRLLLLCRWDKRRWRKIPKRPGSVHRTPSRQC) the chain is Cytoplasmic. Ser451 is modified (phosphoserine). Thr455 carries the phosphothreonine modification. Phosphoserine is present on Ser457.

This sequence belongs to the G-protein coupled receptor 1 family. Muscarinic acetylcholine receptor subfamily. CHRM1 sub-subfamily. Interacts with GPRASP2. Interacts with TMEM147.

Its subcellular location is the cell membrane. It is found in the postsynaptic cell membrane. Its function is as follows. The muscarinic acetylcholine receptor mediates various cellular responses, including inhibition of adenylate cyclase, breakdown of phosphoinositides and modulation of potassium channels through the action of G proteins. Primary transducing effect is Pi turnover. The polypeptide is Muscarinic acetylcholine receptor M1 (Chrm1) (Mus musculus (Mouse)).